The following is a 254-amino-acid chain: Uracil-DNA glycosylase (254 aa).

The Proton acceptor role is filled by D91.

This sequence belongs to the uracil-DNA glycosylase (UDG) superfamily. UNG family.

It localises to the host nucleus. The catalysed reaction is Hydrolyzes single-stranded DNA or mismatched double-stranded DNA and polynucleotides, releasing free uracil.. Excises uracil residues from the DNA which can arise as a result of misincorporation of dUMP residues by DNA polymerase or deamination of cytosines. Therefore may reduce deleterious uracil incorporation into the viral genome, particularly in terminally differentiated cells which lack DNA repair enzymes. This Homo sapiens (Human) protein is Uracil-DNA glycosylase (U81).